A 392-amino-acid chain; its full sequence is ABSCISIC ACID-INSENSITIVE 5-like protein 4 (392 aa).

A disordered region spans residues 1–22 (MGTHIDINNLGGDTSRGNESKP). 3 positions are modified to phosphoserine: Ser28, Ser50, and Ser96. A Phosphothreonine modification is found at Thr135. Residues 266 to 297 (NMGGAGGTVTATSPGTSSAENNTWSSPVPYVF) form a disordered region. Over residues 274-291 (VTATSPGTSSAENNTWSS) the composition is skewed to polar residues. The bZIP domain maps to 311 to 374 (VERRQKRMIK…NSELKEFSKQ (64 aa)). A basic motif region spans residues 313–332 (RRQKRMIKNRESAARSRARK). The segment at 339 to 360 (LEAEIESLKLVNQDLQKKQAEI) is leucine-zipper.

The protein belongs to the bZIP family. ABI5 subfamily. DNA-binding heterodimer. Interacts with ABI3 and the AFP proteins AFP1, AFP2, AFP3 and AFP4. Phosphorylated by CPK4, CPK11, SRK2D and SRK2I in vitro.

The protein localises to the nucleus. Its function is as follows. Binds to the ABA-responsive element (ABRE). Could participate in abscisic acid-regulated gene expression. This is ABSCISIC ACID-INSENSITIVE 5-like protein 4 (ABF1) from Arabidopsis thaliana (Mouse-ear cress).